A 270-amino-acid chain; its full sequence is Putative pyruvate, phosphate dikinase regulatory protein 2 (270 aa).

Position 151–158 (151–158 (GVSRTSKT)) interacts with ADP.

It belongs to the pyruvate, phosphate/water dikinase regulatory protein family. PDRP subfamily.

It catalyses the reaction N(tele)-phospho-L-histidyl/L-threonyl-[pyruvate, phosphate dikinase] + ADP = N(tele)-phospho-L-histidyl/O-phospho-L-threonyl-[pyruvate, phosphate dikinase] + AMP + H(+). The catalysed reaction is N(tele)-phospho-L-histidyl/O-phospho-L-threonyl-[pyruvate, phosphate dikinase] + phosphate + H(+) = N(tele)-phospho-L-histidyl/L-threonyl-[pyruvate, phosphate dikinase] + diphosphate. Functionally, bifunctional serine/threonine kinase and phosphorylase involved in the regulation of the pyruvate, phosphate dikinase (PPDK) by catalyzing its phosphorylation/dephosphorylation. This is Putative pyruvate, phosphate dikinase regulatory protein 2 from Listeria monocytogenes serotype 4b (strain F2365).